A 575-amino-acid chain; its full sequence is Transcription factor COE2 (575 aa).

An interaction with DNA region spans residues 62–65; it reads RKSN. The C5-type zinc-finger motif lies at 150–169; that stretch reads CRVLLTHEVMCSRCCEKKSC. Interaction with DNA regions lie at residues 196-203 and 235-238; these read NCLKTAGN and NNSK. The region spanning 253–336 is the IPT/TIG domain; that stretch reads PCIKAISPSE…KGAPGRFIYT (84 aa). Polar residues predominate over residues 441–453; it reads STQGNNQGYIRNT. A disordered region spans residues 441–479; the sequence is STQGNNQGYIRNTSSISPRGYSSSSTPQQSNYSTSSNSM. The segment covering 454–479 has biased composition (low complexity); it reads SSISPRGYSSSSTPQQSNYSTSSNSM.

This sequence belongs to the COE family. In terms of assembly, forms either a homodimer or a heterodimer with a related family member. Interacts with SIX1.

The protein resides in the nucleus. Functionally, transcription factor that, in osteoblasts, activates the decoy receptor for RANKL, TNFRSF11B, which in turn regulates osteoclast differentiation. Acts in synergy with the Wnt-responsive LEF1/CTNNB1 pathway. Recognizes variations of the palindromic sequence 5'-ATTCCCNNGGGAATT-3'. This is Transcription factor COE2 (EBF2) from Homo sapiens (Human).